A 3005-amino-acid polypeptide reads, in one-letter code: Highly reducing polyketide synthase AFT9-1 (3005 aa).

A Ketosynthase family 3 (KS3) domain is found at 1–337 (MDPQQRLLLE…GTNAHAILER (337 aa)). Active-site for beta-ketoacyl synthase activity residues include Cys-87, His-222, and His-260. Residues 437–751 (VFTGQGAQWP…SYMSALVRGS (315 aa)) are malonyl-CoA:ACP transacylase (MAT) domain. Residues 821–936 (HDLLGLKMTD…GSVEVKYAAA (116 aa)) form an N-terminal hotdog fold region. Residues 821–1114 (HDLLGLKMTD…SGLELRRLAP (294 aa)) are dehydratase (DH) domain. The 298-residue stretch at 821 to 1118 (HDLLGLKMTD…LRRLAPTGQP (298 aa)) folds into the PKS/mFAS DH domain. His-853 functions as the Proton acceptor; for dehydratase activity in the catalytic mechanism. Residues 963-1118 (IEKISSQELY…LRRLAPTGQP (156 aa)) are C-terminal hotdog fold. The active-site Proton donor; for dehydratase activity is Asp-1028. A methyltransferase (CMet) domain region spans residues 1259 to 1445 (ADDSSKRCYD…MRKASLNMQL (187 aa)). The tract at residues 1683 to 1985 (EFMKMPVFTE…QHHRNESTVL (303 aa)) is enoyl reductase (ER) (ER) domain. The ketoreductase (KR) domain stretch occupies residues 2008-2191 (ATYVVSGGRG…YMSLNVGTIE (184 aa)). In terms of domain architecture, Carrier spans 2293–2375 (TRDFEKISQL…SLGAKVASRS (83 aa)). Ser-2335 is subject to O-(pantetheine 4'-phosphoryl)serine.

It participates in mycotoxin biosynthesis. Its function is as follows. Highly reducing polyketide synthase; part of the gene clusters that mediate the biosynthesis of the host-selective toxins (HSTs) AF-toxins responsible for Alternaria black spot of strawberry disease by the strawberry pathotype. AF-toxin I and III are valine derivatives of 2,3-dyhydroxy-isovaleric acid and 2-hydroxy-isovaleric acid respectively, while AF II is an isoleucine derivative of 2-hydroxy-valeric acid. These derivatives are bound to a 9,10-epoxy-8-hydroxy-9-methyl-decatrienoic acid (EDA) moiety. On cellular level, AF-toxins affect plasma membrane of susceptible cells and cause a sudden increase in loss of K(+) after a few minutes of toxin treatment. The aldo-keto reductase AFTS1 catalyzes the conversion of 2-keto-isovaleric acid (2-KIV) to 2-hydroxy-isovaleric acid (2-HIV) by reduction of its ketone to an alcohol. The acyl-CoA ligase AFT1, the hydrolase AFT2 and the enoyl-CoA hydratases AFT3 and AFT6, but also the polyketide synthase AFT9, the acyl-CoA dehydrogenase AFT10, the cytochrome P450 monooxygenase AFT11 and the oxidoreductase AFT12 are all involved in the biosynthesis of the AK-, AF- and ACT-toxin common EDA structural moiety. The exact function of each enzyme, and of additional enzymes identified within the AF-toxin clusters have still to be determined. The protein is Highly reducing polyketide synthase AFT9-1 of Alternaria alternata (Alternaria rot fungus).